The chain runs to 129 residues: Small ribosomal subunit protein uS9 (129 aa).

Belongs to the universal ribosomal protein uS9 family.

The chain is Small ribosomal subunit protein uS9 from Nitratiruptor sp. (strain SB155-2).